Consider the following 236-residue polypeptide: Purine nucleoside phosphorylase CA_C1699 (236 aa).

Zn(2+) contacts are provided by His62, Cys97, and His114.

The protein belongs to the purine nucleoside phosphorylase YfiH/LACC1 family. As to quaternary structure, homodimer. The cofactor is Cu(2+). Requires Zn(2+) as cofactor.

It catalyses the reaction adenosine + phosphate = alpha-D-ribose 1-phosphate + adenine. The enzyme catalyses S-methyl-5'-thioadenosine + phosphate = 5-(methylsulfanyl)-alpha-D-ribose 1-phosphate + adenine. It carries out the reaction inosine + phosphate = alpha-D-ribose 1-phosphate + hypoxanthine. The catalysed reaction is adenosine + H2O + H(+) = inosine + NH4(+). Its function is as follows. Purine nucleoside enzyme that catalyzes the phosphorolysis of adenosine and inosine nucleosides, yielding D-ribose 1-phosphate and the respective free bases, adenine and hypoxanthine. Also catalyzes the phosphorolysis of S-methyl-5'-thioadenosine into adenine and S-methyl-5-thio-alpha-D-ribose 1-phosphate. Also has adenosine deaminase activity. The protein is Purine nucleoside phosphorylase CA_C1699 of Clostridium acetobutylicum (strain ATCC 824 / DSM 792 / JCM 1419 / IAM 19013 / LMG 5710 / NBRC 13948 / NRRL B-527 / VKM B-1787 / 2291 / W).